The sequence spans 287 residues: Bifunctional protein FolD (287 aa).

NADP(+) contacts are provided by residues 165–167 (NRS), serine 190, and isoleucine 233.

The protein belongs to the tetrahydrofolate dehydrogenase/cyclohydrolase family. Homodimer.

It carries out the reaction (6R)-5,10-methylene-5,6,7,8-tetrahydrofolate + NADP(+) = (6R)-5,10-methenyltetrahydrofolate + NADPH. The enzyme catalyses (6R)-5,10-methenyltetrahydrofolate + H2O = (6R)-10-formyltetrahydrofolate + H(+). Its pathway is one-carbon metabolism; tetrahydrofolate interconversion. In terms of biological role, catalyzes the oxidation of 5,10-methylenetetrahydrofolate to 5,10-methenyltetrahydrofolate and then the hydrolysis of 5,10-methenyltetrahydrofolate to 10-formyltetrahydrofolate. In Nitrosopumilus maritimus (strain SCM1), this protein is Bifunctional protein FolD.